Reading from the N-terminus, the 303-residue chain is Rhomboid-related protein 2 (303 aa).

Residues 20–39 (MKEELEEEEKMREDGGGKDR) form a disordered region. Residues 28–39 (EKMREDGGGKDR) show a composition bias toward basic and acidic residues. Transmembrane regions (helical) follow at residues 72 to 92 (PVFI…YAVW), 128 to 148 (LVHA…VLGI), 159 to 179 (VGLV…IFDP), 183 to 203 (LVGA…NVLV), 212 to 232 (FGIF…GFAL), 245 to 265 (VSFA…YTVF), and 278 to 298 (FWIA…FNIF). Serine 187 (nucleophile) is an active-site residue. Histidine 250 is an active-site residue.

The protein belongs to the peptidase S54 family. In terms of processing, proteolytic processing of the proenzyme produces a N-terminal fragment (NTF) and a C-terminal fragment (CTF). The processing is required for activation of the protease.

The protein localises to the cell membrane. It carries out the reaction Cleaves type-1 transmembrane domains using a catalytic dyad composed of serine and histidine that are contributed by different transmembrane domains.. Involved in regulated intramembrane proteolysis and the subsequent release of functional polypeptides from their membrane anchors. Known substrate: EFNB3. The protein is Rhomboid-related protein 2 (RHBDL2) of Homo sapiens (Human).